The primary structure comprises 355 residues: Heat-inducible transcription repressor HrcA (355 aa).

It belongs to the HrcA family.

In terms of biological role, negative regulator of class I heat shock genes (grpE-dnaK-dnaJ and groELS operons). Prevents heat-shock induction of these operons. This Nitratidesulfovibrio vulgaris (strain DP4) (Desulfovibrio vulgaris) protein is Heat-inducible transcription repressor HrcA.